Consider the following 732-residue polypeptide: Catalase-peroxidase (732 aa).

The disordered stretch occupies residues 1 to 24 (MDAKTDDNSAGKCPVAHGSAGRTN). The segment at residues 96-219 (WHSAGTYRIA…LGAVQMGLIY (124 aa)) is a cross-link (tryptophyl-tyrosyl-methioninium (Trp-Tyr) (with M-245)). His97 acts as the Proton acceptor in catalysis. A cross-link (tryptophyl-tyrosyl-methioninium (Tyr-Met) (with W-96)) is located at residues 219–245 (YVNPEGPNGNPDPLAAARDIRDTFARM). His260 contacts heme b.

Belongs to the peroxidase family. Peroxidase/catalase subfamily. Homodimer or homotetramer. Heme b serves as cofactor. In terms of processing, formation of the three residue Trp-Tyr-Met cross-link is important for the catalase, but not the peroxidase activity of the enzyme.

It carries out the reaction H2O2 + AH2 = A + 2 H2O. The enzyme catalyses 2 H2O2 = O2 + 2 H2O. Its function is as follows. Bifunctional enzyme with both catalase and broad-spectrum peroxidase activity. This chain is Catalase-peroxidase, found in Mesorhizobium japonicum (strain LMG 29417 / CECT 9101 / MAFF 303099) (Mesorhizobium loti (strain MAFF 303099)).